The sequence spans 203 residues: MSSNELTERVLVIASGNAGKIREFRQLLAHLPLSVQAQPKDLAVEETGQTFAENARIKALTVAQATGQWALADDSGLSVEALAGAPGVYSARYAASDALRIERLLQELKGIDDRRAHFSAALCIASETNEVLLEVEGRCEGLITHAARGEKGFGYDPIFEVDATGTTFAEMTIEQKRQWSHRGCAFALLDPALQELLHKQNKP.

15–20 (SGNAGK) contributes to the substrate binding site. Mg(2+)-binding residues include glutamate 45 and aspartate 74. The Proton acceptor role is filled by aspartate 74. Residues serine 75, 153–156 (FGYD), lysine 176, and 181–182 (HR) each bind substrate.

This sequence belongs to the HAM1 NTPase family. In terms of assembly, homodimer. Mg(2+) serves as cofactor.

It carries out the reaction XTP + H2O = XMP + diphosphate + H(+). The catalysed reaction is dITP + H2O = dIMP + diphosphate + H(+). The enzyme catalyses ITP + H2O = IMP + diphosphate + H(+). Pyrophosphatase that catalyzes the hydrolysis of nucleoside triphosphates to their monophosphate derivatives, with a high preference for the non-canonical purine nucleotides XTP (xanthosine triphosphate), dITP (deoxyinosine triphosphate) and ITP. Seems to function as a house-cleaning enzyme that removes non-canonical purine nucleotides from the nucleotide pool, thus preventing their incorporation into DNA/RNA and avoiding chromosomal lesions. The polypeptide is dITP/XTP pyrophosphatase (Prochlorococcus marinus (strain MIT 9313)).